The primary structure comprises 292 residues: 4-hydroxy-tetrahydrodipicolinate synthase (292 aa).

Threonine 45 provides a ligand contact to pyruvate. The active-site Proton donor/acceptor is tyrosine 133. The Schiff-base intermediate with substrate role is filled by lysine 161. Isoleucine 203 provides a ligand contact to pyruvate.

It belongs to the DapA family. In terms of assembly, homotetramer; dimer of dimers.

Its subcellular location is the cytoplasm. It carries out the reaction L-aspartate 4-semialdehyde + pyruvate = (2S,4S)-4-hydroxy-2,3,4,5-tetrahydrodipicolinate + H2O + H(+). It participates in amino-acid biosynthesis; L-lysine biosynthesis via DAP pathway; (S)-tetrahydrodipicolinate from L-aspartate: step 3/4. In terms of biological role, catalyzes the condensation of (S)-aspartate-beta-semialdehyde [(S)-ASA] and pyruvate to 4-hydroxy-tetrahydrodipicolinate (HTPA). This Nitrosococcus oceani (strain ATCC 19707 / BCRC 17464 / JCM 30415 / NCIMB 11848 / C-107) protein is 4-hydroxy-tetrahydrodipicolinate synthase.